We begin with the raw amino-acid sequence, 520 residues long: Amino-acid permease BAT1 homolog (520 aa).

Helical transmembrane passes span 39–59, 74–94, 118–138, 168–188, 193–213, 236–256, 278–298, 334–354, 387–407, 410–430, 454–474, and 487–507; these read VLSNFAFSFSIISVLTGITTL, FGWFVAGAFTMTVGLSMAEIC, FASWITGWFNIVGQWAVTTSV, VVIAFHAAILLSHAAINSLPI, FFGQFAAAWNMLGVFVLMIAV, AGIHSNFYIFVLGLLMSQYTL, IGIISAIGISIIVGWGYILGI, SGIGGIICLGIVAVAIYFCGM, VPINAVWLSALISLCMALPSL, LVAFQAMVSIATIGLYVAYAL, GVAVGWAAVLWVATITVLFSL, and YTPVAVGGLFLLVLSSWLLSA.

This sequence belongs to the amino acid-polyamine-organocation (APC) superfamily. Amino acid/choline transporter (ACT) (TC 2.A.3.4) family.

It localises to the membrane. May be involved in the transport of amino acids. This is Amino-acid permease BAT1 homolog (BAT1) from Oryza sativa subsp. japonica (Rice).